The primary structure comprises 90 residues: Small ribosomal subunit protein uS17 (90 aa).

Belongs to the universal ribosomal protein uS17 family. In terms of assembly, part of the 30S ribosomal subunit.

Functionally, one of the primary rRNA binding proteins, it binds specifically to the 5'-end of 16S ribosomal RNA. The polypeptide is Small ribosomal subunit protein uS17 (Burkholderia mallei (strain NCTC 10247)).